The sequence spans 303 residues: Sulfotransferase 6B1 (303 aa).

3'-phosphoadenylyl sulfate is bound at residue 65–70 (KCGSNW). The active-site Proton acceptor is H118. 3'-phosphoadenylyl sulfate-binding positions include R140, S148, Y203, 237 to 242 (STFQAM), and 259 to 261 (RKG).

It belongs to the sulfotransferase 1 family.

The protein resides in the cytoplasm. It is found in the cytosol. The catalysed reaction is thyroxine + 3'-phosphoadenylyl sulfate = thyroxine sulfate + adenosine 3',5'-bisphosphate + H(+). In terms of biological role, sulfotransferase that utilizes 3'-phospho-5'-adenylyl sulfate (PAPS) as sulfonate donor to catalyze the sulfate conjugation of thyroxine. Involved in the metabolism of thyroxine. In Gorilla gorilla gorilla (Western lowland gorilla), this protein is Sulfotransferase 6B1 (SULT6B1).